Reading from the N-terminus, the 897-residue chain is 3'-5' exonuclease DinG (897 aa).

Positions 8–161 (VVDLETTGNQ…DEDAATTAKL (154 aa)) constitute an Exonuclease domain. Residues 241–496 (SKAVDQLGLT…KAIDQLEKQR (256 aa)) form the Helicase ATP-binding domain. An ATP-binding site is contributed by 276–283 (ASLGSGKS). The short motif at 448-451 (DEAH) is the DEAH box element. In terms of domain architecture, Helicase C-terminal spans 703–883 (NIDEYVASIV…NYRQKKGDIQ (181 aa)).

This sequence belongs to the helicase family. DinG subfamily. Type 2 sub-subfamily.

Its function is as follows. 3'-5' exonuclease. The protein is 3'-5' exonuclease DinG of Staphylococcus aureus (strain bovine RF122 / ET3-1).